Consider the following 212-residue polypeptide: 3-demethoxyubiquinol 3-hydroxylase (212 aa).

Residues glutamate 61, glutamate 91, histidine 94, glutamate 143, glutamate 175, and histidine 178 each contribute to the Fe cation site.

This sequence belongs to the COQ7 family. The cofactor is Fe cation.

Its subcellular location is the cell membrane. The enzyme catalyses a 5-methoxy-2-methyl-3-(all-trans-polyprenyl)benzene-1,4-diol + AH2 + O2 = a 3-demethylubiquinol + A + H2O. Its pathway is cofactor biosynthesis; ubiquinone biosynthesis. Functionally, catalyzes the hydroxylation of 2-nonaprenyl-3-methyl-6-methoxy-1,4-benzoquinol during ubiquinone biosynthesis. This is 3-demethoxyubiquinol 3-hydroxylase from Methylibium petroleiphilum (strain ATCC BAA-1232 / LMG 22953 / PM1).